A 78-amino-acid polypeptide reads, in one-letter code: Toxin OAIP 5 (78 aa).

The signal sequence occupies residues 1–19; sequence MLIVILTCALLVIYHAAAA. A propeptide spanning residues 20–40 is cleaved from the precursor; that stretch reads EELEAKDVIESKALATLDEER. Intrachain disulfides connect Cys-43/Cys-56, Cys-47/Cys-70, and Cys-64/Cys-75.

The protein belongs to the neurotoxin 12 (Hwtx-2) family. 05 (OAIP-5) subfamily. As to expression, expressed by the venom gland.

The protein resides in the secreted. Functionally, probable ion channel inhibitor. Shows insecticidal activity when injected into mealworms. The sequence is that of Toxin OAIP 5 from Selenotypus plumipes (Australian featherleg tarantula).